The chain runs to 88 residues: UPF0250 protein IL0958 (88 aa).

This sequence belongs to the UPF0250 family.

The polypeptide is UPF0250 protein IL0958 (Idiomarina loihiensis (strain ATCC BAA-735 / DSM 15497 / L2-TR)).